We begin with the raw amino-acid sequence, 315 residues long: Glutathione synthetase (315 aa).

In terms of domain architecture, ATP-grasp spans 125-310 (KLFTAWFSDL…ITGMLMDAIE (186 aa)). 151–207 (WEKHSDIILKPLDGMGGASIFRVKEGDPNLGVIAETLTEHGTRYCMAQNYLPAIKDG) provides a ligand contact to ATP. Mg(2+) contacts are provided by glutamate 281 and asparagine 283.

Belongs to the prokaryotic GSH synthase family. The cofactor is Mg(2+). Mn(2+) is required as a cofactor.

It carries out the reaction gamma-L-glutamyl-L-cysteine + glycine + ATP = glutathione + ADP + phosphate + H(+). Its pathway is sulfur metabolism; glutathione biosynthesis; glutathione from L-cysteine and L-glutamate: step 2/2. This chain is Glutathione synthetase, found in Escherichia coli O157:H7.